Reading from the N-terminus, the 440-residue chain is Probable exopolygalacturonase C (440 aa).

The signal sequence occupies residues Met-1–Gly-21. Residues Asn-84 and Asn-151 are each glycosylated (N-linked (GlcNAc...) asparagine). PbH1 repeat units lie at residues Gly-188–Thr-210, Gly-217–Thr-238, and Ser-240–Ser-261. An N-linked (GlcNAc...) asparagine glycan is attached at Asn-219. The Proton donor role is filled by Asp-231. His-255 is a catalytic residue. Asn-271 carries N-linked (GlcNAc...) asparagine glycosylation. A PbH1 4 repeat occupies Ile-272–Ser-293. An N-linked (GlcNAc...) asparagine glycan is attached at Asn-313. A disulfide bridge links Cys-389 with Cys-395. Asn-434 is a glycosylation site (N-linked (GlcNAc...) asparagine).

The protein belongs to the glycosyl hydrolase 28 family.

The protein localises to the secreted. It carries out the reaction [(1-&gt;4)-alpha-D-galacturonosyl](n) + H2O = alpha-D-galacturonate + [(1-&gt;4)-alpha-D-galacturonosyl](n-1). Its function is as follows. Specific in hydrolyzing the terminal glycosidic bond of polygalacturonic acid and oligogalacturonates. The protein is Probable exopolygalacturonase C (pgxC) of Aspergillus fumigatus (strain ATCC MYA-4609 / CBS 101355 / FGSC A1100 / Af293) (Neosartorya fumigata).